A 683-amino-acid chain; its full sequence is WD repeat-containing protein 48 homolog (683 aa).

7 WD repeats span residues Ser27 to Tyr82, Gln88 to Cys130, Thr133 to Asn167, Gly176 to Lys215, Gly218 to Thr257, Ala260 to Leu299, and Lys302 to Ile343. Residues Leu341–Ser364 are disordered. A compositionally biased stretch (low complexity) spans Ser351 to Ser364. One copy of the WD 8 repeat lies at Pro389 to Asp428.

The protein belongs to the WD repeat WDR48 family. As to quaternary structure, interacts with usp-46; the interaction increases the catalytic activity of usp-46 in the presence of wdr-20. As to expression, expressed in several head neurons and cells in the tail including the anal depressor cell.

Together with wdr-20, binds to and stimulates the activity of the deubiquitinating enzyme usp-46, leading to deubiquitination and stabilization of the glr-1 glutamate receptor. The protein is WD repeat-containing protein 48 homolog (wdr-48) of Caenorhabditis elegans.